Reading from the N-terminus, the 662-residue chain is MDWDQDRSSTELRKEKSRDAARSRRSQETEVLYQLAHTLPFARGVSAHLDKASIMRLTISYLRMHRLCAAGEWNQVRKEGEPLDACYLKALEGFVMVLTAEGDMAYLSENVSKHLGLSQLELIGHSIFDFIHPCDQEELQDALTPRPSLSKKKSEAATGRHFSLRMKSTLTSRGRALNLKAATWKVLHCSGHMRAYKPPAQTSPAGSPRSEPPLQCLVLICEAIPHPASLEPPLGRGAFLSRHSLDMKFTYCDERIAEVAGYSPDDLIGCSAYEYIHALDSDAVSRSIHTLLSKGQAVTGQYRFLARTGGYLWTQTQATVVSGGRGPQSESIICVHFLISRVEENGVVLSLEQTEQHTRRPPQLGTSSKKGIPGNSLDPPAPRILAFLHPPALSEASLAADPRRFCSPDLRRLMAPILDGPPTAATPSTPQAARRPQSPLPADLPDQLAVGLENAHRLSTARKNKTMETDLDIAQDPDTPDLEMLAPYISMDDDFQLNSSEQLPKVHRRPPRTARRPRARSFHGLSPPIPEATLLPRWGSDPRLNCSSPSKGDPPTAPLTPRTRKRALAQSSEDKGLELLETKPPKRSPRLEPGSVLLPPLSLSFLLQGRQLPGNQPDPRAPLVDSHEPLGLAPSLLSLYQHEETIQSRNHFLPAAGLAQTH.

The tract at residues 1-25 (MDWDQDRSSTELRKEKSRDAARSRR) is disordered. Residues 12–65 (LRKEKSRDAARSRRSQETEVLYQLAHTLPFARGVSAHLDKASIMRLTISYLRMH) enclose the bHLH domain. Positions 75-98 (QVRKEGEPLDACYLKALEGFVMVL) are nuclear localization signal. PAS domains are found at residues 80-150 (GEPL…PSLS) and 225-295 (PHPA…LSKG). The interval 228-272 (ASLEPPLGRGAFLSRHSLDMKFTYCDERIAEVAGYSPDDLIGCSA) is nuclear export signal. The tract at residues 352 to 379 (EQTEQHTRRPPQLGTSSKKGIPGNSLDP) is disordered. The short motif at 410 to 413 (LRRL) is the LRRLL element. Disordered stretches follow at residues 417-445 (ILDG…ADLP) and 459-480 (STAR…PDTP). Residues 421–433 (PPTAATPSTPQAA) are compositionally biased toward low complexity. The tract at residues 448–581 (LAVGLENAHR…SEDKGLELLE (134 aa)) is ODD. The interval 450-501 (VGLENAHRLSTARKNKTMETDLDIAQDPDTPDLEMLAPYISMDDDFQLNSSE) is NTAD. Residue Lys-463 forms a Glycyl lysine isopeptide (Lys-Gly) (interchain with G-Cter in ubiquitin) linkage. Residues 469-480 (TDLDIAQDPDTP) show a composition bias toward acidic residues. The short motif at 485 to 492 (LAPYISMD) is the LAPYISMD element. Position 487 is a 4-hydroxyproline (Pro-487). The disordered stretch occupies residues 500–595 (SEQLPKVHRR…KRSPRLEPGS (96 aa)). Basic residues predominate over residues 505–521 (KVHRRPPRTARRPRARS). Residue Lys-565 forms a Glycyl lysine isopeptide (Lys-Gly) (interchain with G-Cter in ubiquitin) linkage. The span at 572-584 (SEDKGLELLETKP) shows a compositional bias: basic and acidic residues.

Interacts with ARNT, BAD, BCL2L2, EPAS1, HIF1A, MCL1 and VHL. Post-translationally, in normoxia, hydroxylated on Pro-487 in the oxygen-dependent degradation domain (ODD) by PHD. The hydroxylated proline promotes interaction with VHL, initiating rapid ubiquitination and subsequent proteasomal degradation. Ubiquitinated; ubiquitination occurs in a VHL- and oxygen-dependent pathway and subsequently targeted for proteasomal degradation. Expressed in the perivenous zone of the liver. Expressed in all tissues examined during normoxia. Expressed in brain and lung. Expressed in periportal and perivenous hepatocytes and in endothelial cells of the central vein (at protein level). Highest expression seen in the cerebral cortex, hippocampus, and lung. Low expression in myocardial tissue and liver.

It localises to the nucleus. The protein localises to the cytoplasm. It is found in the nucleus speckle. Its subcellular location is the mitochondrion. In terms of biological role, acts as a transcriptional regulator in adaptive response to low oxygen tension. Attenuates the ability of transcription factor HIF1A, EPAS1 and the HIF1A-ARNT complex to bind to hypoxia-responsive elements (HRE) located within the enhancer/promoter of hypoxia-inducible target genes and hence inhibits HRE-driven transcriptional activation. Functions as an inhibitor of angiogenesis in hypoxic cells of the cornea. Plays a role in the development of the cardiorespiratory system. May also be involved in apoptosis. May act as a tumor suppressor. This Rattus norvegicus (Rat) protein is Hypoxia-inducible factor 3-alpha.